A 308-amino-acid polypeptide reads, in one-letter code: Porphobilinogen deaminase (308 aa).

Cys-243 bears the S-(dipyrrolylmethanemethyl)cysteine mark.

It belongs to the HMBS family. Monomer. Dipyrromethane serves as cofactor.

It catalyses the reaction 4 porphobilinogen + H2O = hydroxymethylbilane + 4 NH4(+). The protein operates within porphyrin-containing compound metabolism; protoporphyrin-IX biosynthesis; coproporphyrinogen-III from 5-aminolevulinate: step 2/4. Its function is as follows. Tetrapolymerization of the monopyrrole PBG into the hydroxymethylbilane pre-uroporphyrinogen in several discrete steps. The polypeptide is Porphobilinogen deaminase (Mesorhizobium japonicum (strain LMG 29417 / CECT 9101 / MAFF 303099) (Mesorhizobium loti (strain MAFF 303099))).